Here is a 200-residue protein sequence, read N- to C-terminus: Recombination protein RecR (200 aa).

A C4-type zinc finger spans residues 60–75 (CVYCQALTEDDVCNIC). In terms of domain architecture, Toprim spans 83-177 (TKLCIIESML…KISRIGFGVP (95 aa)).

It belongs to the RecR family.

Functionally, may play a role in DNA repair. It seems to be involved in an RecBC-independent recombinational process of DNA repair. It may act with RecF and RecO. This Francisella tularensis subsp. tularensis (strain WY96-3418) protein is Recombination protein RecR.